The following is a 154-amino-acid chain: Terephthalate 1,2-dioxygenase, terminal oxygenase component subunit beta 1 (154 aa).

The protein belongs to the bacterial ring-hydroxylating dioxygenase beta subunit family. In terms of assembly, heterotetramer composed of 2 alpha (TphA2I and TphA2II) and 2 beta (TphA3I and TphA3II) subunits. Part of a multicomponent enzyme system composed of a reductase (TphA1I or TphA1II) and a two-subunit oxygenase component (TphA2I or TphA2II and TphA3I or TphA3II). Fe cation serves as cofactor.

It carries out the reaction terephthalate + NADH + O2 + H(+) = (3S,4R)-3,4-dihydroxycyclohexa-1,5-diene-1,4-dicarboxylate + NAD(+). Its activity is regulated as follows. Inhibited by EDTA. Functionally, component of the terephthalate 1,2-dioxygenase multicomponent enzyme system which catalyzes the dioxygenation of terephthalate (TER/TPA) to 1,2-dihydroxy-3,5-cyclohexadiene-1,4-dicarboxylic acid (DCD). It can also use 2,5-dicarboxypyridine (PDC) and 1,4-napthalenedicarboxylic acid (NDC) as substrates, and preferentially uses NADPH which is the physiological electron donor. This is Terephthalate 1,2-dioxygenase, terminal oxygenase component subunit beta 1 (tphA3I) from Comamonas sp.